The following is a 142-amino-acid chain: Maximins y/Hv type 1 (142 aa).

Residues 1-18 (MNFKYIVAVSFLIASGYA) form the signal peptide. A propeptide spanning residues 19 to 43 (RSEENDVQSLSQREVLEEESLREIR) is cleaved from the precursor. Phe-68 is modified (phenylalanine amide). Residues 72 to 121 (TAEDHEVMKRLEAVMRDLDSLDHPEEASERETRGFNQEEIANLFTKKEKR) constitute a propeptide that is removed on maturation. Residue Ile-141 is modified to Isoleucine amide.

The protein belongs to the bombinin family. As to expression, expressed by the skin glands.

The protein resides in the secreted. Maximin-y shows antimicrobial activity against bacteria and against the fungus C.albicans. It has little hemolytic activity. In terms of biological role, maximin-Hv shows antimicrobial activity against bacteria and against the fungus C.albicans. Shows strong hemolytic activity. The protein is Maximins y/Hv type 1 of Bombina maxima (Giant fire-bellied toad).